Consider the following 1273-residue polypeptide: Clustered mitochondria protein homolog (1273 aa).

The Clu domain occupies 344–599 (PANNADYSRM…NTYPLDVKFA (256 aa)). TPR repeat units follow at residues 981–1013 (SDQK…KEEV), 1022–1055 (AEKY…YERV), and 1151–1184 (ATLE…FTRE). 2 disordered regions span residues 1217 to 1242 (AEQA…KAEL) and 1254 to 1273 (IEGG…KGKK). Residues 1262–1273 (SKKKSSKKKGKK) show a composition bias toward basic residues.

The protein belongs to the CLU family. May associate with the eukaryotic translation initiation factor 3 (eIF-3) complex.

Its subcellular location is the cytoplasm. In terms of biological role, mRNA-binding protein involved in proper cytoplasmic distribution of mitochondria. This Vanderwaltozyma polyspora (strain ATCC 22028 / DSM 70294 / BCRC 21397 / CBS 2163 / NBRC 10782 / NRRL Y-8283 / UCD 57-17) (Kluyveromyces polysporus) protein is Clustered mitochondria protein homolog.